Reading from the N-terminus, the 528-residue chain is Phosphoenolpyruvate carboxykinase (ATP) (528 aa).

3 residues coordinate substrate: R56, Y192, and K198. ATP-binding positions include K198, H217, and 233–241; that span reads GLSGTGKTT. K198 and H217 together coordinate Mn(2+). D254 contacts Mn(2+). The ATP site is built by E282, R319, and T444. R319 contacts substrate.

This sequence belongs to the phosphoenolpyruvate carboxykinase (ATP) family. Mn(2+) serves as cofactor.

It localises to the cytoplasm. It carries out the reaction oxaloacetate + ATP = phosphoenolpyruvate + ADP + CO2. The protein operates within carbohydrate biosynthesis; gluconeogenesis. Its function is as follows. Involved in the gluconeogenesis. Catalyzes the conversion of oxaloacetate (OAA) to phosphoenolpyruvate (PEP) through direct phosphoryl transfer between the nucleoside triphosphate and OAA. The sequence is that of Phosphoenolpyruvate carboxykinase (ATP) from Lysinibacillus sphaericus (strain C3-41).